The primary structure comprises 671 residues: Major S-layer protein (671 aa).

A signal peptide spans 1-24; sequence MKRFAALSLAALMLLTVFASAASA. N-linked (GlcNAc...) asparagine glycosylation is found at Asn-36, Asn-70, Asn-116, and Asn-350. The segment at 594-650 is disordered; that stretch reads GEEVSGEEETPEETPTGEVTETEGEEETPTEVTETPTEGEPAPEETETTESEGTTPG. The span at 613–622 shows a compositional bias: acidic residues; that stretch reads TETEGEEETP. Residues 623 to 633 are compositionally biased toward low complexity; it reads TEVTETPTEGE. Residues 634–643 show a composition bias toward acidic residues; it reads PAPEETETTE. The helical transmembrane segment at 647–667 threads the bilayer; sequence TTPGFGFMFGLVGLLAVVYLV.

The protein belongs to the Methanosarcinales S-layer protein family. Post-translationally, glycosylated.

It is found in the secreted. It localises to the cell wall. The protein resides in the S-layer. Its subcellular location is the cell membrane. S-layer protein. The S-layer is a paracrystalline mono-layered assembly of proteins which coat the surface of the cell. This Methanosarcina acetivorans (strain ATCC 35395 / DSM 2834 / JCM 12185 / C2A) protein is Major S-layer protein.